The primary structure comprises 328 residues: Peroxidase 59 (328 aa).

Positions 1 to 28 (MKTQTKVMGGHVLLTVFTLCMLCSGVRA) are cleaved as a signal peptide. At Q29 the chain carries Pyrrolidone carboxylic acid. 4 disulfide bridges follow: C39–C116, C72–C77, C122–C323, and C200–C232. The Proton acceptor role is filled by H70. D71, V74, G76, D78, and S80 together coordinate Ca(2+). P163 contributes to the substrate binding site. N182 is a glycosylation site (N-linked (GlcNAc...) asparagine). H193 lines the heme b pocket. A Ca(2+)-binding site is contributed by T194. 2 N-linked (GlcNAc...) asparagine glycosylation sites follow: N209 and N239. Residues D245, T248, T251, and D253 each coordinate Ca(2+). 2 N-linked (GlcNAc...) asparagine glycosylation sites follow: N281 and N310.

Belongs to the peroxidase family. Classical plant (class III) peroxidase subfamily. Requires heme b as cofactor. The cofactor is Ca(2+). Slightly expressed in roots.

The protein localises to the secreted. The catalysed reaction is 2 a phenolic donor + H2O2 = 2 a phenolic radical donor + 2 H2O. In terms of biological role, removal of H(2)O(2), oxidation of toxic reductants, biosynthesis and degradation of lignin, suberization, auxin catabolism, response to environmental stresses such as wounding, pathogen attack and oxidative stress. These functions might be dependent on each isozyme/isoform in each plant tissue. This chain is Peroxidase 59 (PER59), found in Arabidopsis thaliana (Mouse-ear cress).